A 584-amino-acid polypeptide reads, in one-letter code: Proteasome-associated ATPase (584 aa).

Positions 8–90 (RHAERDRDEL…KEEVDRLSQP (83 aa)) form a coiled coil. ATP is bound at residue 272 to 277 (GCGKTL). Positions 583–584 (YL) are docks into pockets in the proteasome alpha-ring.

This sequence belongs to the AAA ATPase family. Homohexamer. Assembles into a hexameric ring structure that caps the 20S proteasome core. Strongly interacts with the prokaryotic ubiquitin-like protein Pup through a hydrophobic interface; the interacting region of ARC lies in its N-terminal coiled-coil domain. There is one Pup binding site per ARC hexamer ring. Upon ATP-binding, the C-terminus of ARC interacts with the alpha-rings of the proteasome core, possibly by binding to the intersubunit pockets.

It participates in protein degradation; proteasomal Pup-dependent pathway. Functionally, ATPase which is responsible for recognizing, binding, unfolding and translocation of pupylated proteins into the bacterial 20S proteasome core particle. May be essential for opening the gate of the 20S proteasome via an interaction with its C-terminus, thereby allowing substrate entry and access to the site of proteolysis. Thus, the C-termini of the proteasomal ATPase may function like a 'key in a lock' to induce gate opening and therefore regulate proteolysis. The chain is Proteasome-associated ATPase from Thermobifida fusca (strain YX).